The following is a 555-amino-acid chain: Natural resistance-associated macrophage protein 1 (555 aa).

Residues 1–63 lie on the Cytoplasmic side of the membrane; sequence MSGSGPAMAS…STPGFSFRKL (63 aa). A helical membrane pass occupies residues 64–81; the sequence is WAFTGPGFLMSIAYLDPG. The Extracellular portion of the chain corresponds to 82–90; sequence NVESDLQCG. The chain crosses the membrane as a helical span at residues 91-110; it reads AVAGFKLLWVLLWATVLGLL. The Cytoplasmic segment spans residues 111–147; the sequence is CQRLAIRLGVVTGKDLAEICYLYYPRVPRVLLWLMME. Residues 148-168 traverse the membrane as a helical segment; the sequence is IAIIGSDMQEVIGTAIAFSLL. The Extracellular portion of the chain corresponds to 169–172; it reads SAGR. A helical membrane pass occupies residues 173–192; the sequence is IPLWGGVLITITDTLFFLFL. The Cytoplasmic portion of the chain corresponds to 193-201; that stretch reads DKYGLRKLE. The chain crosses the membrane as a helical span at residues 202–222; that stretch reads AFFGFLITIMALTFGYEYVMV. The Extracellular portion of the chain corresponds to 223-245; that stretch reads RPAQTEVLKGIFLPYCPGCGREE. The chain crosses the membrane as a helical span at residues 246 to 264; that stretch reads LLQAVGIVGAIIMPHNIFL. Residues 265–292 are Cytoplasmic-facing; it reads HSSLVKTRAIDRSKKEEVKEANMYFLTE. Residues 293–312 traverse the membrane as a helical segment; that stretch reads SCLALFVSFLINLFVMAVFG. Topologically, residues 313–354 are extracellular; it reads EAFYHQRNEDVHNKCVNSSVSRYASIFPINNETVSVDIYQGG. N-linked (GlcNAc...) asparagine glycosylation is found at N329 and N343. The helical transmembrane segment at 355-374 threads the bilayer; that stretch reads VILGCYFGAAALYIWAVGIL. The Cytoplasmic segment spans residues 375 to 405; sequence AAGQSSTMTGTYAGQFVMEGFLQLRWSRFTR. A helical transmembrane segment spans residues 406–423; the sequence is VLFTRSLAILPTLFVAAF. Residues 424–434 lie on the Extracellular side of the membrane; sequence RDVSQLTGMND. A helical transmembrane segment spans residues 435 to 455; it reads LLNVLQSILLPFAVLPVLTFT. Residues 456–471 lie on the Cytoplasmic side of the membrane; it reads SLRPLMHDFANGLLGQ. Residues 472–493 traverse the membrane as a helical segment; sequence VLMSLITGLVCAINVYFVVDFL. Topologically, residues 494-501 are extracellular; it reads PTLRGLGY. A helical membrane pass occupies residues 502 to 521; it reads LIPLGLLLVAYVAFVTYLLW. The Cytoplasmic portion of the chain corresponds to 522-555; sequence TCSIAHGARFLARGRYNRFSFDVTADVPGLAGPH.

It belongs to the NRAMP family. In terms of tissue distribution, macrophages; spleen and thymus and at lower level in liver and lung.

Its subcellular location is the late endosome membrane. The protein resides in the lysosome membrane. The enzyme catalyses Zn(2+)(in) + H(+)(out) = Zn(2+)(out) + H(+)(in). The catalysed reaction is Fe(2+)(in) + H(+)(out) = Fe(2+)(out) + H(+)(in). It catalyses the reaction Mn(2+)(in) + H(+)(out) = Mn(2+)(out) + H(+)(in). In terms of biological role, macrophage-specific antiporter that fluxes metal ions in either direction against a proton gradient. Localized to late endosomal lysosomal membranes, delivers bivalent cations from the cytosol into these acidic compartments where they may directly affect antimicrobial activity. Involved in iron metabolism and host natural resistance to infection with intracellular parasites. Pathogen resistance involves sequestration of Fe(2+) and Mn(2+), cofactors of both prokaryotic and eukaryotic catalases and superoxide dismutases, not only to protect the macrophage against its own generation of reactive oxygen species, but to deny the cations to the pathogen for synthesis of its protective enzymes. In Gallus gallus (Chicken), this protein is Natural resistance-associated macrophage protein 1 (SLC11A1).